We begin with the raw amino-acid sequence, 387 residues long: Phosphoglycerate kinase (387 aa).

Substrate-binding positions include 21-23 (DLN), arginine 36, 59-62 (HLGR), arginine 113, and arginine 146. ATP contacts are provided by residues lysine 197, glutamate 314, and 340-343 (GGDT).

It belongs to the phosphoglycerate kinase family. In terms of assembly, monomer.

It localises to the cytoplasm. It carries out the reaction (2R)-3-phosphoglycerate + ATP = (2R)-3-phospho-glyceroyl phosphate + ADP. The protein operates within carbohydrate degradation; glycolysis; pyruvate from D-glyceraldehyde 3-phosphate: step 2/5. The sequence is that of Phosphoglycerate kinase from Sodalis glossinidius (strain morsitans).